The chain runs to 232 residues: Large ribosomal subunit protein uL1 (232 aa).

The protein belongs to the universal ribosomal protein uL1 family. In terms of assembly, part of the 50S ribosomal subunit.

Binds directly to 23S rRNA. The L1 stalk is quite mobile in the ribosome, and is involved in E site tRNA release. Functionally, protein L1 is also a translational repressor protein, it controls the translation of the L11 operon by binding to its mRNA. This is Large ribosomal subunit protein uL1 from Liberibacter asiaticus (Citrus greening disease).